The sequence spans 460 residues: Cysteine--tRNA ligase (460 aa).

C28 lines the Zn(2+) pocket. The 'HIGH' region motif lies at 30 to 40 (VTIYDLCHIGH). C209, H234, and E238 together coordinate Zn(2+). The short motif at 266–270 (KMSKS) is the 'KMSKS' region element. Residue K269 participates in ATP binding.

The protein belongs to the class-I aminoacyl-tRNA synthetase family. Monomer. The cofactor is Zn(2+).

The protein resides in the cytoplasm. It carries out the reaction tRNA(Cys) + L-cysteine + ATP = L-cysteinyl-tRNA(Cys) + AMP + diphosphate. The chain is Cysteine--tRNA ligase from Vibrio vulnificus (strain CMCP6).